The chain runs to 171 residues: Homeobox protein engrailed-1-B (171 aa).

2 disordered regions span residues 1–41 (EDPG…NAAP) and 60–86 (YSDR…KRPR). Residues 15-29 (PDSDTPSDSSKGSDS) are compositionally biased toward low complexity. The segment at residues 82–141 (DKRPRTAFTAEQLQRLKAEFQANRYITEQRRQTLAQELSLNESQIKIWFQNKRAKIKKAS) is a DNA-binding region (homeobox).

It belongs to the engrailed homeobox family.

It is found in the nucleus. In terms of biological role, required for proper formation of the apical ectodermal ridge and correct dorsal-ventral patterning in the limb. This is Homeobox protein engrailed-1-B (en1-b) from Xenopus laevis (African clawed frog).